A 484-amino-acid chain; its full sequence is Crt homolog 2 (484 aa).

At M1–T57 the chain is on the cytoplasmic side. Residues A58–L78 traverse the membrane as a helical segment. The Vacuolar portion of the chain corresponds to K79–Q94. Residues L95 to T115 traverse the membrane as a helical segment. At N116 to W128 the chain is on the cytoplasmic side. Residues K129–I149 traverse the membrane as a helical segment. Residues K150–P154 lie on the Vacuolar side of the membrane. A helical membrane pass occupies residues L155–L175. Residues K176 to R178 are Cytoplasmic-facing. Residues Y179 to I199 form a helical membrane-spanning segment. The Vacuolar segment spans residues P200 to N210. N206 carries N-linked (GlcNAc...) asparagine glycosylation. Residues M211 to Y231 form a helical membrane-spanning segment. Residues K232–V244 are Cytoplasmic-facing. Residues W245–I265 traverse the membrane as a helical segment. Residues N266–W328 lie on the Vacuolar side of the membrane. N302 carries an N-linked (GlcNAc...) asparagine glycan. A helical transmembrane segment spans residues V329–L349. Residues K350 to T355 are Cytoplasmic-facing. A helical membrane pass occupies residues V356–M378. Residues G379 to S382 are Vacuolar-facing. A helical membrane pass occupies residues N383–Y403. Residues R404–Q484 are Cytoplasmic-facing.

This sequence belongs to the CRT-like transporter family.

It is found in the vacuole membrane. Nutrient transporter. Involved in maintaining the osmotic homeostasis of the digestive vacuole. The polypeptide is Crt homolog 2 (crtp2) (Dictyostelium discoideum (Social amoeba)).